The following is a 202-amino-acid chain: Small ribosomal subunit protein uS4c (202 aa).

An S4 RNA-binding domain is found at 90–153 (MRLDNIIFRL…KSEAIISKNI (64 aa)).

This sequence belongs to the universal ribosomal protein uS4 family. In terms of assembly, part of the 30S ribosomal subunit. Contacts protein S5. The interaction surface between S4 and S5 is involved in control of translational fidelity.

The protein resides in the plastid. It is found in the chloroplast. In terms of biological role, one of the primary rRNA binding proteins, it binds directly to 16S rRNA where it nucleates assembly of the body of the 30S subunit. Functionally, with S5 and S12 plays an important role in translational accuracy. The sequence is that of Small ribosomal subunit protein uS4c (rps4) from Hookeria lucens (Moss).